Consider the following 474-residue polypeptide: Glutamate--tRNA ligase (474 aa).

The short motif at 9–19 (PSPTGFLHVGG) is the 'HIGH' region element. The 'KMSKS' region signature appears at 240-244 (KLSKR). Lys243 is an ATP binding site.

Belongs to the class-I aminoacyl-tRNA synthetase family. Glutamate--tRNA ligase type 1 subfamily. Monomer.

Its subcellular location is the cytoplasm. The enzyme catalyses tRNA(Glu) + L-glutamate + ATP = L-glutamyl-tRNA(Glu) + AMP + diphosphate. Its function is as follows. Catalyzes the attachment of glutamate to tRNA(Glu) in a two-step reaction: glutamate is first activated by ATP to form Glu-AMP and then transferred to the acceptor end of tRNA(Glu). This Photobacterium profundum (strain SS9) protein is Glutamate--tRNA ligase.